The primary structure comprises 625 residues: Procollagen galactosyltransferase 2 (625 aa).

An N-terminal signal peptide occupies residues 1–26 (MAARLATVACALFLLSSALLRLGCRA). N-linked (GlcNAc...) asparagine glycosylation is found at N96, N184, N381, and N579. Positions 597-625 (QGHIRSTAKNTEALPPPTSLDTVPSRDEL) are disordered. The Prevents secretion from ER motif lies at 622–625 (RDEL).

It belongs to the glycosyltransferase 25 family.

It is found in the endoplasmic reticulum lumen. The enzyme catalyses (5R)-5-hydroxy-L-lysyl-[collagen] + UDP-alpha-D-galactose = (5R)-5-O-(beta-D-galactosyl)-5-hydroxy-L-lysyl-[collagen] + UDP + H(+). Functionally, beta-galactosyltransferase that transfers beta-galactose to hydroxylysine residues of collagen. This is Procollagen galactosyltransferase 2 (Colgalt2) from Mus musculus (Mouse).